Here is a 65-residue protein sequence, read N- to C-terminus: MPKIKTVRGAAKRFKKTASGGFKRKQSHLRHILTKKTTKRKRHLRHKSMVAKADQVLVVACLPYV.

Residues 1 to 26 form a disordered region; the sequence is MPKIKTVRGAAKRFKKTASGGFKRKQ. The segment covering 10-26 has biased composition (basic residues); that stretch reads AAKRFKKTASGGFKRKQ.

The protein belongs to the bacterial ribosomal protein bL35 family.

In Mannheimia succiniciproducens (strain KCTC 0769BP / MBEL55E), this protein is Large ribosomal subunit protein bL35.